The chain runs to 1372 residues: MTPSSNSVKTSRFNKVRTDIIGDTDLPNNLIKSLSKSPPHFYNHIIDKKGLRDIIAWAYKSHGIAATAELADDIKDLGFKYATVAAVSISIDDLKIPKEKKFLLEQAEEQITATEERYRLGEITEVERHTKVIDTWTETNERLVLAIKKNFNENDPLNSVWMMANSGARGNISQVRQLVGMRGLMANPQGEIIDLPIRANFKEGLTVTEYVISSYGARKGLVDTALRTADSGYLTRRLVDVAQDVIVREDDCGTERGIVVEADEKGNYGTKLVGRLAAQSVVVDNENRVLVRRNREIDLITACRIEAADIPSVIVRSPLTCEAARSVCRKCYGWALAHNALVDLGEAVGIIAAQSIGEPGTQLTMRTFHTGGVSTAETGLVRSTLEGSIIFGSKARVRPYRTPHGVEAQQAETDFVLQVKPNNGKKSQKVDITNGSLLFVSDSQEVASDTILAQIISGSSVKKSVEKATKDVICDLAGQVRYDEALQPKEVIDRQGSATHKATRLGRVWVLSGDVYNLPPNAKPVIQGNSKVEEGEVLAESRLSSEHGGVVRLRESTGDSREVQIVTTSMTLKDFKLLGESTHSGEIWHLEAKDTTRYLLKTQPGSKIGNGEVIAELADERFRTKTGGLVKYAPGGLSIKKARSAKNGYEVNKGGTLLWIPQETHEINKDISLLMIEDGQWIEDKTEVVKDIFSQIAGIVTVTQKNDILREITVRPGTLYPCNESKVIERFKGEGLLVDEEEIISKNLKAEKRVFVQSVETSEGPQLLIRPVEEYTIPEVAHLPELAIVKQNSGPYLGLKATQRLNFKDGELIKSVEGVELLKTQLILETFDTTPQMTVDVEKVTDKRSKTLERLQLVILETLLVRRDTISDASHGSTHTELQVNDGDLVKSGDVVATTQILCKEVGIVQLPKQIDNEPIRRIIVERDQDTMTIPLGSAPLVSVGQRLVDGDLLAENDPSPCCGQVETIKNNTIIIRIGRPYMISSDSTLHVKDRELVQRGDSLALLVFERQKTGDIVQGLPRIEELLEARRPRDSAVLCKQPGVLTLRHDEETDSSIAVIKSANGEETEYPILLGRNLMVSVGQHIKAGELLTDGPINPHELLEYLFADLRSRKPLMEAAREAIAKVQSRLVTEVQNVYKSQGVTIHNKHIEVIVRQMTSKVRIEDAGETTLLPGELIELRHVEKVNKAMFMTSSSPAVFIPELLGITKASLNTDSFISAASFQETTRVLTEAAIEGKTDYLRGLKENVIIGRLIPAGTGFSGFEEELRSEAGPHPDILDEDPAGYRRMQNLRPDYTVDMPAAASASPAALLDDPSDDELEATRSRHGIEVTTSNTAAFTRPVIVNKIMEDQILDPDIIASLQEEGLLTRE.

The Zn(2+) site is built by cysteine 252, cysteine 321, cysteine 328, and cysteine 331.

The protein belongs to the RNA polymerase beta' chain family. RpoC2 subfamily. As to quaternary structure, in plastids the minimal PEP RNA polymerase catalytic core is composed of four subunits: alpha, beta, beta', and beta''. When a (nuclear-encoded) sigma factor is associated with the core the holoenzyme is formed, which can initiate transcription. Requires Zn(2+) as cofactor.

Its subcellular location is the plastid. The protein resides in the organellar chromatophore. It carries out the reaction RNA(n) + a ribonucleoside 5'-triphosphate = RNA(n+1) + diphosphate. Functionally, DNA-dependent RNA polymerase catalyzes the transcription of DNA into RNA using the four ribonucleoside triphosphates as substrates. This chain is DNA-directed RNA polymerase subunit beta'', found in Paulinella chromatophora.